The primary structure comprises 437 residues: Aminopeptidase G (437 aa).

Active-site residues include Cys70, His361, and Asn382.

Belongs to the peptidase C1 family.

Its subcellular location is the cytoplasm. The chain is Aminopeptidase G (pepG) from Lactobacillus delbrueckii subsp. lactis.